Consider the following 394-residue polypeptide: Tryptophan synthase beta chain (394 aa).

The residue at position 90 (lysine 90) is an N6-(pyridoxal phosphate)lysine.

The protein belongs to the TrpB family. In terms of assembly, tetramer of two alpha and two beta chains. Pyridoxal 5'-phosphate is required as a cofactor.

It carries out the reaction (1S,2R)-1-C-(indol-3-yl)glycerol 3-phosphate + L-serine = D-glyceraldehyde 3-phosphate + L-tryptophan + H2O. It functions in the pathway amino-acid biosynthesis; L-tryptophan biosynthesis; L-tryptophan from chorismate: step 5/5. Its function is as follows. The beta subunit is responsible for the synthesis of L-tryptophan from indole and L-serine. This chain is Tryptophan synthase beta chain, found in Parabacteroides distasonis (strain ATCC 8503 / DSM 20701 / CIP 104284 / JCM 5825 / NCTC 11152).